A 142-amino-acid chain; its full sequence is Maximins y/Hw (142 aa).

The N-terminal stretch at 1–18 (MIFKYIVAVSFLIASGYA) is a signal peptide. A propeptide spanning residues 19–43 (RSVKNDEQSLSQREVLEEESLREIR) is cleaved from the precursor. F68 carries the phenylalanine amide modification. Positions 72-121 (TAEDHEVMKRLEAVIRDLDSLDHSEEASERETRGFNQEEIANLFTKKEKR) are excised as a propeptide. I141 bears the Isoleucine amide mark.

This sequence belongs to the bombinin family. As to expression, expressed by the skin glands.

It is found in the secreted. Functionally, maximin-y shows antimicrobial activity against bacteria and against the fungus C.albicans. It has little hemolytic activity. Maximin-Hw shows antimicrobial activity against bacteria and against the fungus C.albicans. Shows strong hemolytic activity. The protein is Maximins y/Hw of Bombina maxima (Giant fire-bellied toad).